We begin with the raw amino-acid sequence, 293 residues long: Small ribosomal subunit protein uS3 (293 aa).

The KH type-2 domain occupies 39 to 107; the sequence is VREYLKAKLK…PVAVNIEEVR (69 aa). A disordered region spans residues 210–293; that stretch reads RNDLPAVETP…PATAADGKGE (84 aa). Positions 219 to 238 are enriched in basic and acidic residues; the sequence is PRPEEERRPRGPRRDGRPGG.

It belongs to the universal ribosomal protein uS3 family. In terms of assembly, part of the 30S ribosomal subunit. Forms a tight complex with proteins S10 and S14.

Binds the lower part of the 30S subunit head. Binds mRNA in the 70S ribosome, positioning it for translation. The sequence is that of Small ribosomal subunit protein uS3 from Paracidovorax citrulli (strain AAC00-1) (Acidovorax citrulli).